Reading from the N-terminus, the 352-residue chain is C-C chemokine receptor type 5 (352 aa).

Residues 1-30 (MDYQVSSPTYDIDYYTSEPCQKINVKQIAA) lie on the Extracellular side of the membrane. Sulfotyrosine is present on Y3. S6 and S7 each carry an O-linked (GalNAc...) serine glycan. Sulfotyrosine occurs at positions 10, 14, and 15. Intrachain disulfides connect C20–C269 and C101–C178. The chain crosses the membrane as a helical span at residues 31-58 (RLLPPLYSLVFIFGFVGNILVVLILINC). Residues 59–68 (KRLKSMTDIY) are Cytoplasmic-facing. Residues 69 to 89 (LLNLAISDLLFLLTVPFWAHY) form a helical membrane-spanning segment. The Extracellular portion of the chain corresponds to 90–102 (AAAQWDFGNTMCQ). A helical membrane pass occupies residues 103 to 124 (LLTGLYFIGFFSGIFFIILLTI). The Cytoplasmic portion of the chain corresponds to 125-141 (DRYLAIVHAVFALKART). A helical transmembrane segment spans residues 142–166 (VTFGVVTSVITWVVAVFASLPGIIF). Residues 167–198 (TRSQREGLHYTCSSHFPYSQYQFWKNFQTLKI) are Extracellular-facing. Residues 199-218 (VILGLVLPLLVMVICYSGIL) traverse the membrane as a helical segment. Over 219–235 (KTLLRCRNEKKRHRAVR) the chain is Cytoplasmic. The helical transmembrane segment at 236 to 260 (LIFTIMIVYFLFWAPYNIVLLLNTF) threads the bilayer. Residues 261 to 277 (QEFFGLNNCSSSNRLDQ) are Extracellular-facing. The chain crosses the membrane as a helical span at residues 278 to 301 (AMQVTETLGMTHCCINPIIYAFVG). Residues 302–352 (EKFRNYLLVFFQKHIAKRFCKCCSIFQQEAPERASSVYTRSTGEQEISVGL) are Cytoplasmic-facing. S-palmitoyl cysteine attachment occurs at residues C321, C323, and C324. A phosphoserine; by BARK1 mark is found at S336, S337, S342, and S349.

This sequence belongs to the G-protein coupled receptor 1 family. Interacts with PRAF2. Efficient ligand binding to CCL3/MIP-1alpha and CCL4/MIP-1beta requires sulfation, O-glycosylation and sialic acid modifications. Glycosylation on Ser-6 is required for efficient binding of CCL4. Interacts with GRK2. Interacts with ARRB1 and ARRB2. Interacts with CNIH4. Interacts with S100A4; this interaction stimulates T-lymphocyte chemotaxis. Post-translationally, sulfated on at least 2 of the N-terminal tyrosines. Sulfation is required for efficient binding of the chemokines, CCL3 and CCL4. Palmitoylation in the C-terminal is important for cell surface expression. In terms of processing, phosphorylation on serine residues in the C-terminal is stimulated by binding CC chemokines especially by APO-RANTES. Post-translationally, O-glycosylated, but not N-glycosylated. Ser-6 appears to be the major site even if Ser-7 may be also O-glycosylated. Also sialylated glycans present which contribute to chemokine binding. Thr-16 and Ser-17 may also be glycosylated and, if so, with small moieties such as a T-antigen.

The protein localises to the cell membrane. Its function is as follows. Receptor for a number of inflammatory CC-chemokines including CCL3/MIP-1-alpha, CCL4/MIP-1-beta and RANTES and subsequently transduces a signal by increasing the intracellular calcium ion level. May play a role in the control of granulocytic lineage proliferation or differentiation. Participates in T-lymphocyte migration to the infection site by acting as a chemotactic receptor. The sequence is that of C-C chemokine receptor type 5 (CCR5) from Papio anubis (Olive baboon).